The sequence spans 930 residues: A disintegrin and metalloproteinase with thrombospondin motifs 5 (930 aa).

An N-terminal signal peptide occupies residues M1 to P16. Positions L17 to R261 are excised as a propeptide. Disordered regions lie at residues A24–R69 and R206–R231. Residues A31–Q42 are compositionally biased toward low complexity. Positions R46–G59 are enriched in basic and acidic residues. The short motif at A207–S214 is the Cysteine switch element. Zn(2+) is bound at residue C209. The Peptidase M12B domain occupies R267–P476. 8 cysteine pairs are disulfide-bonded: C342–C394, C371–C376, C388–C471, C426–C455, C497–C519, C508–C529, C514–C548, and C542–C553. H410 lines the Zn(2+) pocket. The active site involves E411. Zn(2+)-binding residues include H414 and H420. In terms of domain architecture, Disintegrin spans E485–S566. An N-linked (GlcNAc...) asparagine glycan is attached at N498. Positions H567–P622 constitute a TSP type-1 1 domain. C-linked (Man) tryptophan glycans are attached at residues W570 and W573. 3 disulfides stabilise this stretch: C579–C616, C583–C621, and C594–C606. O-linked (Fuc...) serine glycosylation occurs at S582. N-linked (GlcNAc...) asparagine glycosylation is found at N728, N802, and N807. The interval T732–T874 is spacer. The region spanning S875–K929 is the TSP type-1 2 domain.

The cofactor is Zn(2+). Post-translationally, the precursor is cleaved by furin and PCSK7 outside of the cell. Glycosylated. Can be O-fucosylated by POFUT2 on a serine or a threonine residue found within the consensus sequence C1-X(2)-(S/T)-C2-G of the TSP type-1 repeat domains where C1 and C2 are the first and second cysteine residue of the repeat, respectively. Fucosylated repeats can then be further glycosylated by the addition of a beta-1,3-glucose residue by the glucosyltransferase, B3GALTL. Fucosylation mediates the efficient secretion of ADAMTS family members. Can also be C-glycosylated with one or two mannose molecules on tryptophan residues within the consensus sequence W-X-X-W of the TPRs, and N-glycosylated. These other glycosylations can also facilitate secretion. As to expression, expressed at low level in placenta primarily but also detected in heart and brain, cervix, uterus, bladder, esophagus, rib cartilage, chondroblastoma, fibrous tissue and a joint capsule from an arthritic patient.

Its subcellular location is the secreted. It localises to the extracellular space. The protein resides in the extracellular matrix. Functionally, metalloproteinase that plays an important role in connective tissue organization, development, inflammation and cell migration. Extracellular matrix (ECM) degrading enzyme that show proteolytic activity toward the hyalectan group of chondroitin sulfate proteoglycans (CSPGs) including ACAN, VCAN, BCAN and NCAN. Cleavage within the hyalectans occurs at Glu-Xaa recognition motifs. Plays a role in embryonic development, including limb and cardiac morphogenesis, and skeletal muscle development through its VCAN remodeling properties. Cleaves VCAN in the pericellular matrix surrounding myoblasts, facilitating myoblast contact and fusion which is required for skeletal muscle development and regeneration. Participates in development of brown adipose tissue and browning of white adipose tissue. Plays an important role for T-lymphocyte migration from draining lymph nodes following viral infection. In Homo sapiens (Human), this protein is A disintegrin and metalloproteinase with thrombospondin motifs 5 (ADAMTS5).